The primary structure comprises 314 residues: Methionyl-tRNA formyltransferase (314 aa).

113 to 116 (SILP) is a binding site for (6S)-5,6,7,8-tetrahydrofolate.

The protein belongs to the Fmt family.

It catalyses the reaction L-methionyl-tRNA(fMet) + (6R)-10-formyltetrahydrofolate = N-formyl-L-methionyl-tRNA(fMet) + (6S)-5,6,7,8-tetrahydrofolate + H(+). Attaches a formyl group to the free amino group of methionyl-tRNA(fMet). The formyl group appears to play a dual role in the initiator identity of N-formylmethionyl-tRNA by promoting its recognition by IF2 and preventing the misappropriation of this tRNA by the elongation apparatus. In Photobacterium profundum (strain SS9), this protein is Methionyl-tRNA formyltransferase.